The sequence spans 323 residues: Beta-ketoacyl-[acyl-carrier-protein] synthase III (323 aa).

Residues C114 and H250 contribute to the active site. Residues 251–255 (QANIR) form an ACP-binding region. N280 is a catalytic residue.

It belongs to the thiolase-like superfamily. FabH family. Homodimer.

The protein localises to the cytoplasm. It catalyses the reaction malonyl-[ACP] + acetyl-CoA + H(+) = 3-oxobutanoyl-[ACP] + CO2 + CoA. It functions in the pathway lipid metabolism; fatty acid biosynthesis. Catalyzes the condensation reaction of fatty acid synthesis by the addition to an acyl acceptor of two carbons from malonyl-ACP. Catalyzes the first condensation reaction which initiates fatty acid synthesis and may therefore play a role in governing the total rate of fatty acid production. Possesses both acetoacetyl-ACP synthase and acetyl transacylase activities. Its substrate specificity determines the biosynthesis of branched-chain and/or straight-chain of fatty acids. This chain is Beta-ketoacyl-[acyl-carrier-protein] synthase III, found in Alkalilimnicola ehrlichii (strain ATCC BAA-1101 / DSM 17681 / MLHE-1).